Reading from the N-terminus, the 468-residue chain is Aspartate ammonia-lyase (468 aa).

L-aspartate-binding residues include T101, S140, T141, N142, T187, and H188. The interval 317–326 (GSSIMPGKVN) is SS loop. S318 acts as the Proton acceptor in catalysis. The L-aspartate site is built by S319 and K324.

It belongs to the class-II fumarase/aspartase family. Aspartase subfamily. As to quaternary structure, homotetramer.

The enzyme catalyses L-aspartate = fumarate + NH4(+). Unlike E.coli aspartase, the enzyme is not activated by the presence of divalent metal ions at alkaline pH. In terms of biological role, catalyzes the reversible conversion of L-aspartate to fumarate and ammonia. Is highly specific for L-aspartate in the deamination reaction, and cannot use alternative substrates such as D-aspartic acid, alpha-methyl-DL-aspartic acid, beta-methyl-DL-aspartic acid or L-glutamate. In the reverse reaction, alternative nucleophiles (such as hydroxylamine, hydrazine, methoxylamine and methylamine) can replace ammonia in vitro, leading to the formation of N-substituted aspartic acid derivatives. In Bacillus sp, this protein is Aspartate ammonia-lyase.